A 156-amino-acid chain; its full sequence is Snaclec A3 (156 aa).

The first 23 residues, 1 to 23 (MGRSISVSFGLLVVFLSLSGTGA), serve as a signal peptide directing secretion. 3 disulfides stabilise this stretch: cysteine 27-cysteine 38, cysteine 55-cysteine 154, and cysteine 129-cysteine 146. The C-type lectin domain occupies 34–155 (HEGHCYKVFN…CGQPYRFTCE (122 aa)).

It belongs to the snaclec family. As to quaternary structure, heterodimer; disulfide-linked. In terms of tissue distribution, expressed by the venom gland.

It is found in the secreted. Its function is as follows. Interferes with one step of hemostasis (modulation of platelet aggregation, or coagulation cascade, for example). This Macrovipera lebetinus (Levantine viper) protein is Snaclec A3.